A 59-amino-acid chain; its full sequence is FDVNSHTTPCGPVTCSGAQMCEVDKCVCSDLHCKVKCEHGFKKDDNGCEYACICADAPQ.

5 disulfide bridges follow: C10–C21, C15–C26, C28–C48, C33–C52, and C37–C54. The 27-residue stretch at 28 to 54 (CSDLHCKVKCEHGFKKDDNGCEYACIC) folds into the Antistasin-like domain.

The protein localises to the secreted. Functionally, strong inhibitor of mammalian trypsin, plasmin and acrosin. This Hirudo medicinalis (Medicinal leech) protein is Bdellastasin.